A 131-amino-acid polypeptide reads, in one-letter code: Small ribosomal subunit protein uS8 (131 aa).

The protein belongs to the universal ribosomal protein uS8 family. Part of the 30S ribosomal subunit. Contacts proteins S5 and S12.

Functionally, one of the primary rRNA binding proteins, it binds directly to 16S rRNA central domain where it helps coordinate assembly of the platform of the 30S subunit. In Halorhodospira halophila (strain DSM 244 / SL1) (Ectothiorhodospira halophila (strain DSM 244 / SL1)), this protein is Small ribosomal subunit protein uS8.